A 532-amino-acid polypeptide reads, in one-letter code: T-complex protein 1 subunit epsilon (532 aa).

This sequence belongs to the TCP-1 chaperonin family. In terms of assembly, component of the T-complex protein 1 (TCP1) complex.

It localises to the cytoplasm. In terms of biological role, molecular chaperone; assists the folding of proteins upon ATP hydrolysis. This Encephalitozoon cuniculi (strain GB-M1) (Microsporidian parasite) protein is T-complex protein 1 subunit epsilon (CCT5).